A 409-amino-acid chain; its full sequence is BRCA1-A complex subunit Abraxas 1 (409 aa).

The MPN domain occupies 7–160; the sequence is SAVLSGFVLG…HSLYKPQKGL (154 aa). The residue at position 48 (S48) is a Phosphoserine. Residues 206 to 260 are a coiled coil; the sequence is DGSLKEVHKINEMYASLQEELKSICKKVEDSEQAVDKLVKDVNRLKREIEKRRGA. Residues 362–372 show a composition bias toward basic and acidic residues; the sequence is LLDTQDKRSKA. A disordered region spans residues 362–409; it reads LLDTQDKRSKADTGSSNQDKASKMSSPETDEEIEKMKGFGEYSRSPTF. Residues 373 to 388 show a composition bias toward polar residues; it reads DTGSSNQDKASKMSSP. A phosphoserine mark is found at S386 and S387. T390 is subject to Phosphothreonine. S404 and S406 each carry phosphoserine. Residues 406–409 carry the pSXXF motif motif; it reads SPTF.

This sequence belongs to the FAM175 family. Abraxas subfamily. As to quaternary structure, component of the ARISC complex, at least composed of UIMC1/RAP80, ABRAXAS1, BRCC3/BRCC36, BABAM2 and BABAM1/NBA1. Component of the BRCA1-A complex, at least composed of BRCA1, BARD1, UIMC1/RAP80, ABRAXAS1, BRCC3/BRCC36, BABAM2 and BABAM1/NBA1. In the complex, interacts directly with UIMC1/RAP80, BRCC3/BRCC36 and BABAM2. Interacts directly (when phosphorylated at Ser-406) with BRCA1. Homodimer. The homodimer interacts directly (when phosphorylated at Ser-404 and Ser-406) with two BRCA1 chains, giving rise to a heterotetramer. Binds polyubiquitin. Post-translationally, phosphorylation of Ser-406 of the pSXXF motif by ATM or ATR constitutes a specific recognition motif for the BRCT domain of BRCA1. Ionizing radiation promotes rapid phosphorylation at Ser-404 and Ser-406 by ATM; this promotes recruitment of BRCA1 to sites of DNA damage.

It is found in the nucleus. In terms of biological role, involved in DNA damage response and double-strand break (DSB) repair. Component of the BRCA1-A complex, acting as a central scaffold protein that assembles the various components of the complex and mediates the recruitment of BRCA1. The BRCA1-A complex specifically recognizes 'Lys-63'-linked ubiquitinated histones H2A and H2AX at DNA lesion sites, leading to target the BRCA1-BARD1 heterodimer to sites of DNA damage at DSBs. This complex also possesses deubiquitinase activity that specifically removes 'Lys-63'-linked ubiquitin on histones H2A and H2AX. In Homo sapiens (Human), this protein is BRCA1-A complex subunit Abraxas 1.